The chain runs to 175 residues: Ribosome maturation factor RimM (175 aa).

Positions 103 to 175 constitute a PRC barrel domain; sequence EGEYYWSDLI…LLTVDWDPDF (73 aa).

It belongs to the RimM family. Binds ribosomal protein uS19.

The protein resides in the cytoplasm. Its function is as follows. An accessory protein needed during the final step in the assembly of 30S ribosomal subunit, possibly for assembly of the head region. Essential for efficient processing of 16S rRNA. May be needed both before and after RbfA during the maturation of 16S rRNA. It has affinity for free ribosomal 30S subunits but not for 70S ribosomes. In Nitrosococcus oceani (strain ATCC 19707 / BCRC 17464 / JCM 30415 / NCIMB 11848 / C-107), this protein is Ribosome maturation factor RimM.